The sequence spans 450 residues: Plasminogen-binding protein PgbA (450 aa).

Basic and acidic residues-rich tracts occupy residues 262 to 273 (EIKQEAIKEPKK), 284 to 310 (LEEKNYQKAERKFDAKEERRRSRDERK), and 317 to 362 (KAME…REIN). The tract at residues 262–450 (EIKQEAIKEP…RRKALEMNKK (189 aa)) is disordered. Residues 363-386 (QESANEPSSENNATLKDTENTSVL) show a composition bias toward polar residues. Positions 389–450 (SAAKKEAPKP…RRKALEMNKK (62 aa)) are enriched in basic and acidic residues.

The protein localises to the cell surface. Binds plasminogen, specifically, and in a concentration and lysine-dependent manner. Plasminogen is the precursor of plasmin, a serine protease that cleaves fibrin, fibronectin, laminin and vitronectin. Acquisition of plasminogen/plasmin could enable H.pylori to degrade host components. This chain is Plasminogen-binding protein PgbA (pgbA), found in Helicobacter pylori (strain J99 / ATCC 700824) (Campylobacter pylori J99).